A 94-amino-acid polypeptide reads, in one-letter code: PTS system galactitol-specific EIIB component (94 aa).

A PTS EIIB type-2 domain is found at 1-94 (MKRKIIVACG…QNKILTILQG (94 aa)). C9 functions as the Phosphocysteine intermediate; for EIIB activity in the catalytic mechanism. Phosphocysteine; by EIIA is present on C9.

In terms of assembly, forms a complex with one each of subunit of GatA, GatB and 2 subunits of GatC.

The protein localises to the cytoplasm. The catalysed reaction is galactitol(out) + N(pros)-phospho-L-histidyl-[protein] = galactitol 1-phosphate(in) + L-histidyl-[protein]. Its function is as follows. The phosphoenolpyruvate-dependent sugar phosphotransferase system (PTS), a major carbohydrate active transport system, catalyzes the phosphorylation of incoming sugar substrates concomitant with their translocation across the cell membrane. The enzyme II complex composed of GatA, GatB and GatC is involved in galactitol transport. It can also use D-glucitol. This chain is PTS system galactitol-specific EIIB component, found in Escherichia coli (strain K12).